The primary structure comprises 603 residues: UvrABC system protein C (603 aa).

Residues 14-92 (ELPGVYRMLD…IKSLAPRYNI (79 aa)) enclose the GIY-YIG domain. Positions 201–236 (QEVTRRLTKSMEEASAKLAFEQAAVFRDQIQSLHQV) constitute a UVR domain.

It belongs to the UvrC family. As to quaternary structure, interacts with UvrB in an incision complex.

It is found in the cytoplasm. Its function is as follows. The UvrABC repair system catalyzes the recognition and processing of DNA lesions. UvrC both incises the 5' and 3' sides of the lesion. The N-terminal half is responsible for the 3' incision and the C-terminal half is responsible for the 5' incision. The protein is UvrABC system protein C of Dechloromonas aromatica (strain RCB).